Here is a 464-residue protein sequence, read N- to C-terminus: Soluble pyridine nucleotide transhydrogenase (464 aa).

35–44 (DSRRQVGGNC) is a binding site for FAD.

The protein belongs to the class-I pyridine nucleotide-disulfide oxidoreductase family. FAD is required as a cofactor.

Its subcellular location is the cytoplasm. The enzyme catalyses NAD(+) + NADPH = NADH + NADP(+). Its function is as follows. Conversion of NADPH, generated by peripheral catabolic pathways, to NADH, which can enter the respiratory chain for energy generation. The protein is Soluble pyridine nucleotide transhydrogenase of Pseudomonas fluorescens (strain ATCC BAA-477 / NRRL B-23932 / Pf-5).